Reading from the N-terminus, the 413-residue chain is Histidine--tRNA ligase (413 aa).

The protein belongs to the class-II aminoacyl-tRNA synthetase family. In terms of assembly, homodimer.

It localises to the cytoplasm. The catalysed reaction is tRNA(His) + L-histidine + ATP = L-histidyl-tRNA(His) + AMP + diphosphate + H(+). This Ehrlichia canis (strain Jake) protein is Histidine--tRNA ligase.